The primary structure comprises 61 residues: MARKAMIEKWKKEPKYKTRAYTRCRLCGRPHSVLKKFGICRICFRELAYKGEIPGCRKASW.

Zn(2+) contacts are provided by Cys24, Cys27, Cys40, and Cys43.

It belongs to the universal ribosomal protein uS14 family. Zinc-binding uS14 subfamily. Part of the 30S ribosomal subunit. Contacts proteins S3 and S10. It depends on Zn(2+) as a cofactor.

Functionally, binds 16S rRNA, required for the assembly of 30S particles and may also be responsible for determining the conformation of the 16S rRNA at the A site. In Clostridium perfringens (strain ATCC 13124 / DSM 756 / JCM 1290 / NCIMB 6125 / NCTC 8237 / Type A), this protein is Small ribosomal subunit protein uS14.